We begin with the raw amino-acid sequence, 1249 residues long: MQERHGLPLRSFSSGKALTAGRAVRPEVAQERRYLQGAPLGLELPGRIALRDPHCAWQWFEPEAAAEAFPAAHWLAAFLVLLGRYGNEEITLGFPEPITVRGRQAPALLRSSYRAMESSAERSARLAEELDDARRQLSADGQERAALAGRCAVQVLAARPTASSPGWLALVLAADGSVGLALRDPQYDELRRIAGHLARLARGLVDAQACVGRLPWLDADEERRLQALRSEPQAAPSRGVLHHLFEAQARRTPQRIAVHAADRSLSYAELERESAALAVRLRAAGVAPEQRVGVCLRRDSGLLVGLLGVLRAGGCYVPLDPAYPEERVAYMLDDADCLLVLVDASTRERVAALGRPCLTLEEGGDQANDLALPASEVGADHLAYIIYTSGSTGRPKGVAIEHGSAHAFLRWAGQHYAAEEWSGVLAATSVCFDLSVYELFGTLAEGGTLHLVENLFSLPDYPRRDEISLLNTVPSVCAALLALGDLPGGVRTLNLAGEPLRGHLVRQIRGQPQVRRLVNLYGPTEDTTYSTVHELDLHAEALDEPPIGRPLPGTTVEVLDGFEAPLPLGVAGELYLGGIGLARGYFGKPEQTAERFRVDPGSGERRYRTGDRVRMREDGVLEHLGRLDDQVKFNGFRIELGEIASCLASFPGVSEACAMLTEDSAGLRRLVGYLAAPFAPPLQALNEHLGQSLPHYMLPSAFVVLAELPKTLNGKIDRKALPRPQATGAEPQALPSDPLEQALHQAWQAQLGAPPRAGQGFYAAGGDSLRAVHLLATLRQRLSRRVPLQAFAGGPATPEALLELLRQAAPEGDEPEPSAGAAGLSLAERRLWVAQQLAPEDTSYNLLAHLRIVGATADAIEQALRQLLERHVALRRRVETGVDGPQPHALAAHAVPLQRLLASDAVHAERLLEDGVRREGARVFDLAHEAPARLLLVVTRDSARADLLLSVHHYAFDDVSLAVFAAELKTLLDGGRLGVLASTPEQVAARERAALASGRLDRVAERWAERLLPLAKAPGAAPARPEESGGRAGQRLALPVSAAVHAACRALAERTSVSPFSAALQAFAEVLGAELGVDDLLVGVALAGRSRLEMQGLVGCFVNLLPLAVGLRPEQSVEWRLRQVGHDLLELLEHQDVPLECVTQALRQRGASGLPIRIACGAHNGRAAPAVDAGVRVEADFIPVPGARLDLTLWLEDQPQGWLAVWTGVSAIFDLHRIERLHQAWERRLLANAGEPISKRMSPEGCNAS.

An adenylation region spans residues 245–633 (FEAQARRTPQ…LGRLDDQVKF (389 aa)). Residues 716 to 735 (IDRKALPRPQATGAEPQALP) are disordered. A Carrier domain is found at 734-809 (LPSDPLEQAL…ALLELLRQAA (76 aa)). Ser-768 is modified (O-(pantetheine 4'-phosphoryl)serine). The interval 823-1150 (GLSLAERRLW…CVTQALRQRG (328 aa)) is condensation.

It belongs to the NRP synthetase family. Pantetheine 4'-phosphate serves as cofactor.

It carries out the reaction holo-[peptidyl-carrier protein] + L-alanine + ATP = L-alanyl-[peptidyl-carrier protein] + AMP + diphosphate. In terms of biological role, involved in the biosynthesis of the antimetabolite L-2-amino-4-methoxy-trans-3-butenoic acid (AMB), a non-proteinogenic amino acid which is toxic for prokaryotes and eukaryotes. Adenylates L-alanine and loads it onto its peptidyl carrier domain via a thioester linkage to the phosphopanthetheine moiety. In addition, loads activated L-Ala in trans onto the second carrier domain of AmbE. Can also activate L-Ser, Gly and D-Ala, albeit to a lower extent. The condensation domain of AmbB probably condenses the activated L-Ala and the L-Glu loaded on AmbE to form a L-Glu-L-Ala dipeptide at the first carrier domain of AmbE. This Pseudomonas aeruginosa (strain ATCC 15692 / DSM 22644 / CIP 104116 / JCM 14847 / LMG 12228 / 1C / PRS 101 / PAO1) protein is AMB antimetabolite synthetase AmbB.